Here is a 903-residue protein sequence, read N- to C-terminus: Envelope glycoprotein B (903 aa).

Residues 1 to 29 (MRQGAARGCRWFVVWALLGLTLGVLVASA) form the signal peptide. The segment covering 30–51 (APSSPGTPGVAAATQAANGGPA) has biased composition (low complexity). A disordered region spans residues 30 to 87 (APSSPGTPGVAAATQAANGGPATPAPPAPGPAPTGDTKPKKNKKPKNPPPPRPAGDNA). The Virion surface segment spans residues 30 to 773 (APSSPGTPGV…SGVSSFMSNP (744 aa)). Over residues 52–61 (TPAPPAPGPA) the composition is skewed to pro residues. 2 N-linked (GlcNAc...) asparagine; by host glycosylation sites follow: N86 and N140. 5 disulfides stabilise this stretch: C115/C572, C132/C528, C206/C270, C363/C411, and C595/C632. Involved in fusion and/or binding to host membrane stretches follow at residues 172–178 (VWFGHRY) and 257–264 (RVEAFHRY). N-linked (GlcNAc...) asparagine; by host glycosylation is found at N397 and N429. A disordered region spans residues 469–491 (REQSRKPPNPTPPPPGASANASV). Pro residues predominate over residues 475–484 (PPNPTPPPPG). N-linked (GlcNAc...) asparagine; by host glycosylation occurs at N488. N673 carries an N-linked (GlcNAc...) asparagine; by host glycan. The tract at residues 718–771 (IDTVIHADANAAMFAGLGAFFEGMGDLGRAVGKVVMGIVGGVVSAVSGVSSFMS) is hydrophobic membrane proximal region. A helical membrane pass occupies residues 774–794 (FGALAVGLLVLAGLAAAFFAF). Residues 795–903 (RYVMRLQSNP…KDGDADEDDL (109 aa)) are Intravirion-facing. A Golgi targeting motif is present at residues 848–851 (YMAL). Positions 882–903 (KRRNTNYTQVPNKDGDADEDDL) are disordered. The Internalization motif motif lies at 888–891 (YTQV).

The protein belongs to the herpesviridae glycoprotein B family. Homotrimer; disulfide-linked. Interacts with host receptor MYH9/NMMHC-IIA. Interacts with host receptor MYH10/NMMHC-IIB. Interacts with the host coreceptor PILRA. Binds to heparan sulfate proteoglycans. Interacts with gH/gL heterodimer. Interacts with gD. Post-translationally, the cytoplasmic tail is phosphorylated by the viral kinase US3. Phosphorylation may be linked to a down-regulation of gB expression on cell surface. Ubiquitinated.

It is found in the virion membrane. Its subcellular location is the host cell membrane. The protein resides in the host endosome membrane. It localises to the host Golgi apparatus membrane. In terms of biological role, envelope glycoprotein that forms spikes at the surface of virion envelope and binds to the host cell entry receptors MYH9/NMMHC-IIA and MYH10/NMMHC-IIB, promoting the virus entry into host cells. Essential for the initial attachment to heparan sulfate moieties of the host cell surface proteoglycans. Involved in fusion of viral and cellular membranes leading to virus entry into the host cell: following initial binding to its host cell entry receptors, membrane fusion is mediated by the fusion machinery composed at least of gB and the heterodimer gH/gL. May be involved in the fusion between the virion envelope and the outer nuclear membrane during virion egress. Also plays a role, together with gK, in virus-induced cell-to-cell fusion (syncytia formation). In Homo sapiens (Human), this protein is Envelope glycoprotein B.